Reading from the N-terminus, the 130-residue chain is Small ribosomal subunit protein uS11 (130 aa).

This sequence belongs to the universal ribosomal protein uS11 family. Part of the 30S ribosomal subunit. Interacts with proteins S7 and S18. Binds to IF-3.

In terms of biological role, located on the platform of the 30S subunit, it bridges several disparate RNA helices of the 16S rRNA. Forms part of the Shine-Dalgarno cleft in the 70S ribosome. The sequence is that of Small ribosomal subunit protein uS11 from Campylobacter curvus (strain 525.92).